The following is a 150-amino-acid chain: Heavy metal-associated isoprenylated plant protein 24 (150 aa).

An HMA domain is found at 26–89; it reads QTVALRVARI…AAKSTKKKVE (64 aa). The a metal cation site is built by cysteine 37 and cysteine 40. Cysteine 147 bears the Cysteine methyl ester mark. Cysteine 147 is lipidated: S-farnesyl cysteine. Residues 148 to 150 constitute a propeptide, removed in mature form; it reads AIM.

It belongs to the HIPP family. As to quaternary structure, interacts with ZHD11/HB29.

Its function is as follows. Heavy-metal-binding protein. In Arabidopsis thaliana (Mouse-ear cress), this protein is Heavy metal-associated isoprenylated plant protein 24.